We begin with the raw amino-acid sequence, 395 residues long: Acid ceramidase (395 aa).

The signal sequence occupies residues 1–21 (MPGRSRVALVLLAAAVSCAVA). An intrachain disulfide couples C31 to C340. Catalysis depends on C143, which acts as the Nucleophile. 4 N-linked (GlcNAc...) asparagine glycosylation sites follow: N195, N259, N286, and N342. A disulfide bond links C388 and C392.

The protein belongs to the acid ceramidase family. Heterodimer; disulfide-linked. The heterodimer is composed of the disulfide-linked alpha and beta chains produced by autocatalytic cleavage of the precursor. N-glycosylated. In terms of processing, proteolytically cleaved into two chains alpha and beta that remain associated via a disulfide bond. Cleavage gives rise to a conformation change that activates the enzyme. The same catalytic Cys residue mediates the autoproteolytic cleavage and subsequent hydrolysis of lipid substrates. The beta chain may undergo an additional C-terminal processing.

It localises to the lysosome. The protein localises to the secreted. It catalyses the reaction an N-acylsphing-4-enine + H2O = sphing-4-enine + a fatty acid. The enzyme catalyses N-dodecanoylsphing-4-enine + H2O = dodecanoate + sphing-4-enine. The catalysed reaction is N-tetradecanoylsphing-4-enine + H2O = tetradecanoate + sphing-4-enine. It carries out the reaction N-hexadecanoylsphing-4-enine + H2O = sphing-4-enine + hexadecanoate. It catalyses the reaction N-octadecanoylsphing-4-enine + H2O = sphing-4-enine + octadecanoate. The enzyme catalyses N-dodecanoyl-(4R)-hydroxysphinganine + H2O = (4R)-hydroxysphinganine + dodecanoate. The catalysed reaction is N-(dodecanoyl)-sphinganine + H2O = dodecanoate + sphinganine. It carries out the reaction N-(acetyl)-sphing-4-enine + H2O = sphing-4-enine + acetate. It catalyses the reaction N-(hexanoyl)sphing-4-enine + H2O = hexanoate + sphing-4-enine. The enzyme catalyses N-octanoylsphing-4-enine + H2O = octanoate + sphing-4-enine. The catalysed reaction is N-(9Z-octadecenoyl)-sphing-4-enine + H2O = sphing-4-enine + (9Z)-octadecenoate. It carries out the reaction N-dodecanoylethanolamine + H2O = dodecanoate + ethanolamine. It functions in the pathway lipid metabolism; sphingolipid metabolism. Functionally, lysosomal ceramidase that hydrolyzes sphingolipid ceramides into sphingosine and free fatty acids at acidic pH. Ceramides, sphingosine, and its phosphorylated form sphingosine-1-phosphate are bioactive lipids that mediate cellular signaling pathways regulating several biological processes including cell proliferation, apoptosis and differentiation. Has a higher catalytic efficiency towards C12-ceramides versus other ceramides. Also catalyzes the reverse reaction allowing the synthesis of ceramides from fatty acids and sphingosine. For the reverse synthetic reaction, the natural sphingosine D-erythro isomer is more efficiently utilized as a substrate compared to D-erythro-dihydrosphingosine and D-erythro-phytosphingosine, while the fatty acids with chain lengths of 12 or 14 carbons are the most efficiently used. Also has an N-acylethanolamine hydrolase activity. By regulating the levels of ceramides, sphingosine and sphingosine-1-phosphate in the epidermis, mediates the calcium-induced differentiation of epidermal keratinocytes. Also indirectly regulates tumor necrosis factor/TNF-induced apoptosis. By regulating the intracellular balance between ceramides and sphingosine, in adrenocortical cells, probably also acts as a regulator of steroidogenesis. In Pan troglodytes (Chimpanzee), this protein is Acid ceramidase.